We begin with the raw amino-acid sequence, 209 residues long: Response regulator protein VraR (209 aa).

The Response regulatory domain maps to 4–120 (KVLFVDDHEM…DIADAVRKTY (117 aa)). Residue Asp-55 is modified to 4-aspartylphosphate. The 66-residue stretch at 141–206 (RAELYEMLTE…QAVIYAFQHN (66 aa)) folds into the HTH luxR-type domain. A DNA-binding region (H-T-H motif) is located at residues 165 to 184 (NQEIASASHITIKTVKTHVS).

Phosphorylated by VraS.

Its subcellular location is the cytoplasm. Functionally, member of the two-component regulatory system VraS/VraR involved in the control of the cell wall peptidoglycan biosynthesis. In Staphylococcus epidermidis (strain ATCC 35984 / DSM 28319 / BCRC 17069 / CCUG 31568 / BM 3577 / RP62A), this protein is Response regulator protein VraR (vraR).